A 393-amino-acid polypeptide reads, in one-letter code: Putative zinc metalloprotease Rip3 (393 aa).

A run of 2 helical transmembrane segments spans residues 10–30 and 45–65; these read IAGFVVNVHWSVLVILWLFTW and AVVYWLLGAGGAVMLLASLLA. Zn(2+) is bound at residue His66. The active site involves Glu67. Zn(2+) is bound at residue His70. The next 4 helical transmembrane spans lie at 77 to 97, 108 to 128, 136 to 156, and 207 to 227; these read AGVSVESVTLWLFGGVTALGG, IAFAGPATSLALSATFGALAI, PAIVISVAWWLATVNLLLGLF, and FVAGGLVGGVWLAFIGWFIFA. 2 CBS domains span residues 251 to 308 and 315 to 376; these read MTAQ…RRST and ALPL…AQPE.

Belongs to the peptidase M50B family. Zn(2+) serves as cofactor.

Its subcellular location is the cell membrane. The polypeptide is Putative zinc metalloprotease Rip3 (rip3) (Mycobacterium tuberculosis (strain ATCC 35801 / TMC 107 / Erdman)).